A 2290-amino-acid polypeptide reads, in one-letter code: Autophagy-related protein 2 (2290 aa).

Residues 10–99 (WCKVMLQRYM…MCIEDLQLTF (90 aa)) form the Chorein N-terminal domain. The segment at 829-1549 (DSMMKSVSAD…PNRDHSAFVV (721 aa)) is required for epg-6 binding. Disordered stretches follow at residues 1678–1727 (IGSK…LGDL), 1805–1851 (DDLF…DLTG), 1898–1919 (SETERDSSASPVTSSPIKPARN), and 1967–2003 (EHGNFLDSIDNEDDNEKQKIEEEMEEDEKEEEEERNK). A compositionally biased stretch (low complexity) spans 1681–1692 (KKTTPKTSVSSS). The segment covering 1714-1723 (RPSPVQPPTP) has biased composition (pro residues). The span at 1810-1830 (QSYSSSSSETESESSAPQSSQ) shows a compositional bias: low complexity. The stretch at 1972–2011 (LDSIDNEDDNEKQKIEEEMEEDEKEEEEERNKEIQEAVER) forms a coiled coil. The span at 1988-1999 (EEMEEDEKEEEE) shows a compositional bias: acidic residues.

It belongs to the ATG2 family. As to quaternary structure, interacts with epg-6; the interaction is direct.

It is found in the preautophagosomal structure membrane. It localises to the lipid droplet. The protein localises to the endoplasmic reticulum membrane. The protein resides in the cytoplasm. It catalyses the reaction a 1,2-diacyl-sn-glycero-3-phospho-L-serine(in) = a 1,2-diacyl-sn-glycero-3-phospho-L-serine(out). The catalysed reaction is a 1,2-diacyl-sn-glycero-3-phosphoethanolamine(in) = a 1,2-diacyl-sn-glycero-3-phosphoethanolamine(out). In terms of biological role, lipid transfer protein involved in autophagosome assembly and in the distribution of atg-9 and atg-13 during the autophagy-mediated degradation of protein aggregates. Tethers the edge of the isolation membrane (IM) to the endoplasmic reticulum (ER) and mediates direct lipid transfer from ER to IM for IM expansion. Binds to the ER exit site (ERES), which is the membrane source for autophagosome formation, and extracts phospholipids from the membrane source to the IM for membrane expansion. Involved in autophagy-mediated degradation of ribosomal RNA and ribosomal proteins in lysosomes, which is essential for maintaining nucleotide homeostasis. This is Autophagy-related protein 2 from Caenorhabditis elegans.